The chain runs to 346 residues: LRP2-binding protein (346 aa).

The stretch at 58 to 91 (AMAYFLRGQLYFEEGWYEEALAQFEEIQEKDHQA) is one TPR repeat. Sel1-like repeat units lie at residues 92-124 (IYQL…DSSC), 132-167 (FAAA…DNGN), 172-205 (VKAQ…GNGN), 206-241 (LESQ…ERGN), 242-276 (VYAQ…EVHD), and 296-331 (AMAS…RLNP).

As to quaternary structure, interacts with LRP2.

Its subcellular location is the cytoplasm. In terms of biological role, may act as an adapter that regulates LRP2 function. The chain is LRP2-binding protein (Lrp2bp) from Rattus norvegicus (Rat).